A 428-amino-acid chain; its full sequence is Dihydroorotase (428 aa).

The Zn(2+) site is built by H59 and H61. Substrate contacts are provided by residues 61-63 (HLR) and N93. 3 residues coordinate Zn(2+): D151, H178, and H231. N277 provides a ligand contact to substrate. A Zn(2+)-binding site is contributed by D304. D304 is an active-site residue. Substrate-binding positions include H308 and 322–323 (FG).

The protein belongs to the metallo-dependent hydrolases superfamily. DHOase family. Class I DHOase subfamily. Zn(2+) serves as cofactor.

It catalyses the reaction (S)-dihydroorotate + H2O = N-carbamoyl-L-aspartate + H(+). Its pathway is pyrimidine metabolism; UMP biosynthesis via de novo pathway; (S)-dihydroorotate from bicarbonate: step 3/3. In terms of biological role, catalyzes the reversible cyclization of carbamoyl aspartate to dihydroorotate. The chain is Dihydroorotase from Bacillus cereus (strain G9842).